We begin with the raw amino-acid sequence, 887 residues long: Dystrophin-like protein 1 (887 aa).

The 168-residue stretch at 30-197 (YQHGIHFEAK…KISMQSEDEA (168 aa)) folds into the PID domain. Composition is skewed to basic and acidic residues over residues 176 to 186 (MQEKHEDEAAK) and 205 to 216 (IEERGGREEDSR). Disordered stretches follow at residues 176–254 (MQEK…GTAI), 506–606 (EIHH…QYER), 641–753 (QFDM…KNTA), 804–839 (IAEE…PPNT), and 853–887 (NVDR…GYPQ). Residues 242-254 (KPSTTSSSGGTAI) show a composition bias toward polar residues. The stretch at 434–506 (QLMRSQLDQA…QMLETKITSE (73 aa)) forms a coiled coil. Residues 510–519 (SSSQPPQHQP) are compositionally biased toward low complexity. Basic and acidic residues predominate over residues 573 to 588 (KESKERRKDEGTRTEP). Over residues 597-606 (DYSSSDQYER) the composition is skewed to polar residues. Polar residues-rich tracts occupy residues 816 to 827 (NRNNLPSSTNSS) and 863 to 887 (SLLT…GYPQ).

In terms of assembly, component of the dystrophin glycoprotein complex (DGC). Interacts with zyx-1. As to expression, expressed in muscles of the head, body wall and vulva. In some animals, weaker expression is observed in the intestinal muscles (at protein level). Isoform a is expressed in lateral neurons SDQL and SDQR.

Its function is as follows. Together with dys-1 and hlh-1, participates in a common muscular function. This chain is Dystrophin-like protein 1, found in Caenorhabditis elegans.